The chain runs to 182 residues: Large ribosomal subunit protein uL6 (182 aa).

Belongs to the universal ribosomal protein uL6 family. In terms of assembly, part of the 50S ribosomal subunit.

This protein binds to the 23S rRNA, and is important in its secondary structure. It is located near the subunit interface in the base of the L7/L12 stalk, and near the tRNA binding site of the peptidyltransferase center. The polypeptide is Large ribosomal subunit protein uL6 (Caldicellulosiruptor saccharolyticus (strain ATCC 43494 / DSM 8903 / Tp8T 6331)).